The primary structure comprises 426 residues: Serine--tRNA ligase (426 aa).

A disordered region spans residues 37–63 (RKSVQTRTEQLQAERNARSKSIGQAKA). 233–235 (TAE) lines the L-serine pocket. 264–266 (RSE) contributes to the ATP binding site. Residue glutamate 287 coordinates L-serine. 351-354 (EISS) is a binding site for ATP. Serine 387 provides a ligand contact to L-serine.

The protein belongs to the class-II aminoacyl-tRNA synthetase family. Type-1 seryl-tRNA synthetase subfamily. Homodimer. The tRNA molecule binds across the dimer.

The protein localises to the cytoplasm. The enzyme catalyses tRNA(Ser) + L-serine + ATP = L-seryl-tRNA(Ser) + AMP + diphosphate + H(+). It catalyses the reaction tRNA(Sec) + L-serine + ATP = L-seryl-tRNA(Sec) + AMP + diphosphate + H(+). It functions in the pathway aminoacyl-tRNA biosynthesis; selenocysteinyl-tRNA(Sec) biosynthesis; L-seryl-tRNA(Sec) from L-serine and tRNA(Sec): step 1/1. In terms of biological role, catalyzes the attachment of serine to tRNA(Ser). Is also able to aminoacylate tRNA(Sec) with serine, to form the misacylated tRNA L-seryl-tRNA(Sec), which will be further converted into selenocysteinyl-tRNA(Sec). This Pseudomonas entomophila (strain L48) protein is Serine--tRNA ligase.